We begin with the raw amino-acid sequence, 263 residues long: MTRIDDKFAQLAKDGKKAFVAYVMAGDPNYETSLEVVKGLPAAGVDVIELGLPFTDPMADGPTIQLAGQRALEAGMTLQKTLDLARAFRKDDQTTPIVMMGYYNPIYSRGVDRFLAEAKDAGIDGLIVVDLPPEEDSELCLPAQAAGLNFIRLATPTTDDKRLPRVLQNTSGFVYYVSITGITGAAEAQAVDVGPEVARIKSAAALPVIVGFGVNTPEKSKAIAEVADGVVVGSAIVGKIGAGQSVSDVLAFVKTLADGAHSV.

Active-site proton acceptor residues include E49 and D60.

Belongs to the TrpA family. As to quaternary structure, tetramer of two alpha and two beta chains.

It carries out the reaction (1S,2R)-1-C-(indol-3-yl)glycerol 3-phosphate + L-serine = D-glyceraldehyde 3-phosphate + L-tryptophan + H2O. It functions in the pathway amino-acid biosynthesis; L-tryptophan biosynthesis; L-tryptophan from chorismate: step 5/5. Functionally, the alpha subunit is responsible for the aldol cleavage of indoleglycerol phosphate to indole and glyceraldehyde 3-phosphate. In Roseobacter denitrificans (strain ATCC 33942 / OCh 114) (Erythrobacter sp. (strain OCh 114)), this protein is Tryptophan synthase alpha chain.